Consider the following 445-residue polypeptide: Arabinooligosaccharide-binding protein (445 aa).

A signal peptide spans 1-20 (MGKNILFFSFVGVMVLVLVA). C21 carries N-palmitoyl cysteine lipidation. C21 is lipidated: S-diacylglycerol cysteine.

Belongs to the bacterial solute-binding protein 1 family. The complex is composed of two ATP-binding proteins (MsmX), two transmembrane proteins (AraP and AraQ) and a solute-binding protein (AraN).

The protein localises to the cell membrane. Functionally, part of the ABC transporter complex AraNPQ involved in the uptake of arabinooligosaccharides. AraN captures the substrate and delivers it to the two transmembrane components. The sequence is that of Arabinooligosaccharide-binding protein (araN) from Halalkalibacterium halodurans (strain ATCC BAA-125 / DSM 18197 / FERM 7344 / JCM 9153 / C-125) (Bacillus halodurans).